The primary structure comprises 806 residues: Sucrose synthase (806 aa).

The tract at residues 275 to 752 (MVFNVVILSP…GLQRIEEKYT (478 aa)) is GT-B glycosyltransferase.

The protein belongs to the glycosyltransferase 1 family. Plant sucrose synthase subfamily.

It carries out the reaction an NDP-alpha-D-glucose + D-fructose = a ribonucleoside 5'-diphosphate + sucrose + H(+). Functionally, sucrose-cleaving enzyme that provides UDP-glucose and fructose for various metabolic pathways. In Vicia faba (Broad bean), this protein is Sucrose synthase (SUCS).